The sequence spans 471 residues: Glutamate--tRNA ligase 2 (471 aa).

Residues 15-25 (PSPTGYLHIGG) carry the 'HIGH' region motif. The short motif at 243 to 247 (KLSKR) is the 'KMSKS' region element. An ATP-binding site is contributed by Lys246.

The protein belongs to the class-I aminoacyl-tRNA synthetase family. Glutamate--tRNA ligase type 1 subfamily. As to quaternary structure, monomer.

Its subcellular location is the cytoplasm. The catalysed reaction is tRNA(Glu) + L-glutamate + ATP = L-glutamyl-tRNA(Glu) + AMP + diphosphate. Functionally, catalyzes the attachment of glutamate to tRNA(Glu) in a two-step reaction: glutamate is first activated by ATP to form Glu-AMP and then transferred to the acceptor end of tRNA(Glu). This is Glutamate--tRNA ligase 2 from Cereibacter sphaeroides (strain ATCC 17025 / ATH 2.4.3) (Rhodobacter sphaeroides).